Reading from the N-terminus, the 2924-residue chain is MNNLKNIDLIEKGVAIVGIGFRIPSGNNENSICSPDDLFNNLKNGFDGVSSTSERWSDNYHKLGEISSPNAGLLPLNEWKSFDPLFFGINPSEASLIDPQQRLLLKCTWEALEDASIDPISIRGTNTSVFIGASNIDYQHTNKHQDSVLKNAIAQSTCAISNRISYCFDFNGPSLSIDTACSSSLNAVSQGYHSILNGTSDISIVGGVNLILDVEMTKAYSYLSMLSKTHGKCKAFDESGDGFTRGECVGVVVLKNLQDAIKDGNRIYCVINGSSSNVDGNGNMDKVNFYSPSKQSQFNNINSAFKSTNDKLSINDIQYIEAHGTGTKTGDPIETEAISMAFKNRDKSAPILIGSIKSNIGHCEAGSGVASLIKCCLMFKYQCFLPNIHFKNPNPLIKFNEWNLKVVTSPIPFNKRNNEKPVSMMINNFGVTGSNCCLLISEFKNNNNFKENINLESQSVNDRVLIPFSANSSNSLNQYQSKFKNIINNQFNFIDFTAIQIYSKSNYLYQRSVVIASNSNELFENISNKKQIQTKNSIISNMSFKGKNPITIFVFSGQGSQYPKMALELYNNEVIFKKSIDLIDSKLSKYYGFSVWEKVKTIKDDDLTSIHDPIFAQPALCMISVSLFELYYHWGVNPSFILGHSLGEISASYCSGMIDLDTFCYTVYQRSIAQSKTNGCGRMLSINISDEEFKSMYSQKYPQIEIACYNSPQSIVVAGNESILNEISKELKEKEIFTAMLGSLSSFHTSSQQSTKDSILQLNIESNQPKVPIFSTVTTNLFNESNRFNSQYVYDNIIKPVKFTQTISNIYKHIESNQLDNDIVFIEIAPHPTLSFYIKQMVPSSLNESVSVYSALHKKKNDVEEFQQTISNLYCQNGYNINFKCQFNNKKSNLNIELPLYQWSDELYFAQNQVLEQHRKGGPPIDHLGLSNSYYSPFKNSYKTLIDINYKPFQYLKGHMVKGKYYFPGCGYIDNIIQLYKNQDIFISFIEFKTPLILIEGINQYLQTNIQQTGKSEYRAQFHFKDHKSNEWIQSSNSNFQLLDHGNDIPSNYNIKEIIKNKCNLSKLTKNELYKNIKSKTGLNYTGVFQGVTECYIGDNCTLSVVSLESQTNSFLNIPILDTCLHGMLILINDQCQIVFDKAIGFKYYSSNIPADFKENKDSFYVYSNLRPRVGGDSYHGTIIVMLSDGSVLYEIEEVVCKSLIPIKDSLKIEYPNDELYKVHLQSKDSPIPTPSSFKSIIYENDFFQSSLNIPEDLFKYISTLFYKDIIKRCPEININKINSHSVNEIISSFSKISKHERLFRFVFETIKENGILNSFEEKDDTYFEFNKVIIKSSRIISKLLFPLENDNDNEDLPQSLFQNGLMDKIYKCSYLRKKNQVISHVIKHSIKEIINNNIIIRILEFGGGTASLSVEVIEEIVTLLQENPNYQVEIEYTWSDISPAFIADAKNKINKIINDAAITNGLNVIYHPLTIGESLIETQSIKPSYYDFVIMSNVLHVVKDIKQAVEQMYQLLTTNGQLVFLEPPYKSVLNDSIVGSFEQWWSFTDTDIRKDRCGMPQQSWYQLLNSCNFKDIVMSKECIFFGSVIQAQKPPISLLNSQPKYDNIIIYGGSINSSFVENIKLDSNSKSLFQIETIQEFNKLISKSTITNDSIVYFIKTLETLSLDNFKQITLEYIEINQKLLQINSLCKHVLIVSDSRKTNYLASSAIGAARYFDEFPLLKLHTLDFDYDSTQNYINSKNNKMVQFINILTDSKTNVHKEMIIINNKVYYEIVQKEKNLKLKYNSESFENQNNLMCSLSPNLEYQLQSKQIKLRDNQVEVKTIATGINYKDYLNFSGSNSNGDDNTGLPQFGYEFSGIITRVGNNVKDYKVGDNVFGLSNSCTSSHIVTNFKKIQIKPSKISHIEASSIPIDYLTSFMSLFNVGSLNIEDNESILIHLGRDGFGLSTFEILKWKGFKSNLFVTVNSDKTKQYLLKKYGDLITGIYSNTDKSYVAEIKNKLIKLGSKKKGVDLILNTLPSDFMDSNFKLLTKYGRIIDLNSNHLNQSEFLKNINFKYNHGYHNFELSLFQKNKILKCLNEISNAIENGELKTIPIKEFTNLNIKDAIKYITNGNIEKITVSHDHEIYSDIIYRYLDEKEFSILKSNYQINSNNLGKNILITGQSGIILEILKWIIKYSNINTIENVIILSRSSLKWELELLINQTKLSNNNIKFHFKSVDVGDSEQVDNAINDILNENQQIRNIDSIFHFAFQQIACKVQEINMKHLNISHGAKSMGAINLHNQSIKRNWKLINFVMASSALSFIDSTDQCTYACANTLLDSFSKYRVSLGLPSTCINLGLIESTGFVSKNESISVFLDGNGIIPTPINRVLGLLDLQIQNASKFTNSMISNFKPSKFKNNQQISLFLKFDYLMNLKNNSEQTKKENTGNKNIDELFIEKVSELFSMDESKINKNLRLIDYGADSLIIVQLKNWIDKEIGINLITIQQLQNNTINISIKMILNSLMKNNQNKYLPSNRIDYWKNEMKFEESIKPIPNEIRSRNNNSGKIILLTGTTGFLGGFLLFNMLRLDSCKLIYCLIRNKSKSSYPLDEIINNLKYHQLYEKLNKSQISKIIPIIGDLSMNKLGLSNDDYETISKNVNLIINPGADINQKSSYQDCKLVNVNGVKEIIKLSLSSLKQRIPIVNFSSFSVFFNQSLDKNFDESVLPSIDNIDNLPTEYMKSKVVGEYILLEASKNYNIPSILIRPPSIFLNPETGIGHSSDLTLLMIQSCYELGYCPNQILNGFILINTITWLSNNITNIIMNDNCWTNSKMNIYNVHGKQIQSSLIIKPLEKHFNCKQINNNDWIDMVNNSNKKSCIKLKSFHSLENIFKSENKGYKSNESQSISLSTKSLLESMGSYNTDLKITDKMIISHIKHIFK.

Residues 11 to 442 form the Ketosynthase family 3 (KS3) domain; the sequence is EKGVAIVGIG…GSNCCLLISE (432 aa). Residues cysteine 181, histidine 323, and histidine 362 each act as for beta-ketoacyl synthase activity in the active site. Residues 635 to 668 are acyl/malonyl transferase; that stretch reads GVNPSFILGHSLGEISASYCSGMIDLDTFCYTVY. Serine 645 functions as the For acyl/malonyl transferase activity in the catalytic mechanism. Positions 925 to 1047 are N-terminal hotdog fold; it reads IDHLGLSNSY…SNFQLLDHGN (123 aa). The region spanning 925 to 1210 is the PKS/mFAS DH domain; sequence IDHLGLSNSY…CKSLIPIKDS (286 aa). Catalysis depends on histidine 959, which acts as the Proton acceptor; for dehydratase activity. The C-terminal hotdog fold stretch occupies residues 1064–1210; sequence NLSKLTKNEL…CKSLIPIKDS (147 aa). The Proton donor; for dehydratase activity role is filled by aspartate 1122. Residues 2431 to 2508 form the Carrier domain; it reads TGNKNIDELF…ISIKMILNSL (78 aa). Residue serine 2468 is modified to O-(pantetheine 4'-phosphoryl)serine. A helical transmembrane segment spans residues 2551 to 2571; sequence KIILLTGTTGFLGGFLLFNML.

The cofactor is pantetheine 4'-phosphate.

The protein localises to the membrane. Probable polyketide synthase. The polypeptide is Probable polyketide synthase 6 (pks6) (Dictyostelium discoideum (Social amoeba)).